Here is a 419-residue protein sequence, read N- to C-terminus: Gamma-glutamyl phosphate reductase (419 aa).

The protein belongs to the gamma-glutamyl phosphate reductase family.

The protein resides in the cytoplasm. The catalysed reaction is L-glutamate 5-semialdehyde + phosphate + NADP(+) = L-glutamyl 5-phosphate + NADPH + H(+). It functions in the pathway amino-acid biosynthesis; L-proline biosynthesis; L-glutamate 5-semialdehyde from L-glutamate: step 2/2. Catalyzes the NADPH-dependent reduction of L-glutamate 5-phosphate into L-glutamate 5-semialdehyde and phosphate. The product spontaneously undergoes cyclization to form 1-pyrroline-5-carboxylate. The sequence is that of Gamma-glutamyl phosphate reductase from Solidesulfovibrio magneticus (strain ATCC 700980 / DSM 13731 / RS-1) (Desulfovibrio magneticus).